The primary structure comprises 162 residues: NADH-ubiquinone oxidoreductase subunit 8 (162 aa).

4Fe-4S ferredoxin-type domains are found at residues R54–E83 and T93–N122. Residues C63, C66, C69, C73, C102, C105, C108, and C112 each coordinate [4Fe-4S] cluster.

Belongs to the complex I 23 kDa subunit family. The cofactor is [4Fe-4S] cluster.

It localises to the mitochondrion. The enzyme catalyses a ubiquinone + NADH + 5 H(+)(in) = a ubiquinol + NAD(+) + 4 H(+)(out). Functionally, core subunit of the mitochondrial membrane respiratory chain NADH dehydrogenase (Complex I) that is believed to belong to the minimal assembly required for catalysis. Complex I functions in the transfer of electrons from NADH to the respiratory chain. The immediate electron acceptor for the enzyme is believed to be ubiquinone. May donate electrons to ubiquinone. This is NADH-ubiquinone oxidoreductase subunit 8 (NAD8) from Reclinomonas americana.